Consider the following 121-residue polypeptide: Small ribosomal subunit protein uS13 (121 aa).

The segment at 91–121 (HRKGLPVRGQRTRTNARTRKGKKKTVAGKKK) is disordered.

Belongs to the universal ribosomal protein uS13 family. In terms of assembly, part of the 30S ribosomal subunit. Forms a loose heterodimer with protein S19. Forms two bridges to the 50S subunit in the 70S ribosome.

In terms of biological role, located at the top of the head of the 30S subunit, it contacts several helices of the 16S rRNA. In the 70S ribosome it contacts the 23S rRNA (bridge B1a) and protein L5 of the 50S subunit (bridge B1b), connecting the 2 subunits; these bridges are implicated in subunit movement. Contacts the tRNAs in the A and P-sites. The protein is Small ribosomal subunit protein uS13 of Treponema denticola (strain ATCC 35405 / DSM 14222 / CIP 103919 / JCM 8153 / KCTC 15104).